An 88-amino-acid polypeptide reads, in one-letter code: Co-chaperonin GroES (88 aa).

It belongs to the GroES chaperonin family. In terms of assembly, heptamer of 7 subunits arranged in a ring. Interacts with the chaperonin GroEL.

Its subcellular location is the cytoplasm. Together with the chaperonin GroEL, plays an essential role in assisting protein folding. The GroEL-GroES system forms a nano-cage that allows encapsulation of the non-native substrate proteins and provides a physical environment optimized to promote and accelerate protein folding. GroES binds to the apical surface of the GroEL ring, thereby capping the opening of the GroEL channel. This is Co-chaperonin GroES from Thermodesulfovibrio yellowstonii (strain ATCC 51303 / DSM 11347 / YP87).